Consider the following 204-residue polypeptide: Holliday junction branch migration complex subunit RuvA (204 aa).

A domain I region spans residues 1-67 (MIDYLYGTLD…GGVISLYGFF (67 aa)). Positions 68 to 149 (TIEEREMYLL…TVNVLNKEKQ (82 aa)) are domain II. Positions 150–154 (TGAET) are flexible linker. Residues 155–204 (IKNTMVSEAIAGLITLGYKMQQARVAVTNVYEHNENITLEDLIKKSLQYL) form a domain III region.

Belongs to the RuvA family. As to quaternary structure, homotetramer. Forms an RuvA(8)-RuvB(12)-Holliday junction (HJ) complex. HJ DNA is sandwiched between 2 RuvA tetramers; dsDNA enters through RuvA and exits via RuvB. An RuvB hexamer assembles on each DNA strand where it exits the tetramer. Each RuvB hexamer is contacted by two RuvA subunits (via domain III) on 2 adjacent RuvB subunits; this complex drives branch migration. In the full resolvosome a probable DNA-RuvA(4)-RuvB(12)-RuvC(2) complex forms which resolves the HJ.

It is found in the cytoplasm. Functionally, the RuvA-RuvB-RuvC complex processes Holliday junction (HJ) DNA during genetic recombination and DNA repair, while the RuvA-RuvB complex plays an important role in the rescue of blocked DNA replication forks via replication fork reversal (RFR). RuvA specifically binds to HJ cruciform DNA, conferring on it an open structure. The RuvB hexamer acts as an ATP-dependent pump, pulling dsDNA into and through the RuvAB complex. HJ branch migration allows RuvC to scan DNA until it finds its consensus sequence, where it cleaves and resolves the cruciform DNA. In Endomicrobium trichonymphae, this protein is Holliday junction branch migration complex subunit RuvA.